Consider the following 208-residue polypeptide: 3-demethoxyubiquinol 3-hydroxylase (208 aa).

Residues glutamate 57, glutamate 87, histidine 90, glutamate 139, glutamate 171, and histidine 174 each coordinate Fe cation.

Belongs to the COQ7 family. Fe cation serves as cofactor.

It localises to the cell membrane. It catalyses the reaction a 5-methoxy-2-methyl-3-(all-trans-polyprenyl)benzene-1,4-diol + AH2 + O2 = a 3-demethylubiquinol + A + H2O. It participates in cofactor biosynthesis; ubiquinone biosynthesis. Catalyzes the hydroxylation of 2-nonaprenyl-3-methyl-6-methoxy-1,4-benzoquinol during ubiquinone biosynthesis. This is 3-demethoxyubiquinol 3-hydroxylase from Janthinobacterium sp. (strain Marseille) (Minibacterium massiliensis).